We begin with the raw amino-acid sequence, 84 residues long: Toxin NvePTx1 (84 aa).

The first 21 residues, 1–21 (MFSARLVLVFAVVLCIQLCNA), serve as a signal peptide directing secretion. A propeptide spanning residues 22-34 (SWLDERAMTQEKR) is cleaved from the precursor.

This sequence belongs to the sea anemone type 5 potassium channel toxin family. Post-translationally, contains 4 disulfide bonds. As to expression, in unfertilized eggs and early post-fertilization stages, is expressed uniformly. In gastrulae, the expression becomes spatially-localized and seems to be absent from the oral and aboral poles. In planulae, the expression is clearly observed in the ectoderm in packed gland cells absent from the two body poles, and upon metamorphosis, the expression diminishes. There is two types of gland cells, one large and elongated and another small and round. This toxin is maternally deposited at both protein and RNA levels.

The protein resides in the secreted. Its subcellular location is the nematocyst. Its function is as follows. Neurotoxin that is probably only defensive. Acts as a voltage-gated potassium channel (Kv) inhibitor. In vivo, induces a rapid increase in swimming speed on zebrafish larvae, as well as death which occurs between 2 and 18 hours later. The sequence is that of Toxin NvePTx1 from Nematostella vectensis (Starlet sea anemone).